The chain runs to 443 residues: Aspartic protease PEP3 (443 aa).

An N-terminal signal peptide occupies residues 1-36 (MQNRPRVFDSAMNLSPNMHFLSLMPGLLLLSLQVHT). Residues 37-107 (SPTPLKKTIR…NTVSKAMQAN (71 aa)) constitute a propeptide, activation peptide. In terms of domain architecture, Peptidase A1 spans 123 to 440 (YLSPVTIGGQ…DLRGPSLHVA (318 aa)). The active site involves aspartate 139. Asparagine 180 and asparagine 293 each carry an N-linked (GlcNAc...) asparagine glycan. The active site involves aspartate 327. Cysteine 363 and cysteine 403 form a disulfide bridge. 2 N-linked (GlcNAc...) asparagine glycosylation sites follow: asparagine 364 and asparagine 388.

The protein belongs to the peptidase A1 family. In terms of assembly, monomer.

The protein resides in the secreted. Secreted aspartic endopeptidase that allows assimilation of proteinaceous substrates. The scissile peptide bond is attacked by a nucleophilic water molecule activated by two aspartic residues in the active site. Shows a broad primary substrate specificity. Favors hydrophobic residues at the P1 and P1' positions. In Coccidioides posadasii (strain C735) (Valley fever fungus), this protein is Aspartic protease PEP3.